The sequence spans 159 residues: Probable E3 ubiquitin-protein ligase RHA1A (159 aa).

The RING-type; atypical zinc-finger motif lies at 86-130 (CTVCLSDFESDDKVRQLPKCGHVFHHYCLDRWIVDYNKMKCPVCR).

Predominantly expressed in stems.

The catalysed reaction is S-ubiquitinyl-[E2 ubiquitin-conjugating enzyme]-L-cysteine + [acceptor protein]-L-lysine = [E2 ubiquitin-conjugating enzyme]-L-cysteine + N(6)-ubiquitinyl-[acceptor protein]-L-lysine.. It participates in protein modification; protein ubiquitination. Functionally, probable E3 ubiquitin-protein ligase that may possess E3 ubiquitin ligase activity in vitro. The polypeptide is Probable E3 ubiquitin-protein ligase RHA1A (Arabidopsis thaliana (Mouse-ear cress)).